The primary structure comprises 514 residues: Periplasmic [NiFeSe] hydrogenase large subunit (514 aa).

Glutamate 52 contributes to the Fe cation binding site. The Ni(2+) site is built by cysteine 71 and cysteine 74. Residues cysteine 74 and isoleucine 445 each coordinate Fe cation. Ni(2+) is bound by residues selenocysteine 493 and cysteine 496. Residue selenocysteine 493 is a non-standard amino acid, selenocysteine. Cysteine 496 and histidine 499 together coordinate Fe cation.

The protein belongs to the [NiFe]/[NiFeSe] hydrogenase large subunit family. Heterodimer of a large and a small subunit. The cofactor is Fe cation. Ni(2+) is required as a cofactor.

The protein localises to the periplasm. It catalyses the reaction H2 + A = AH2. The chain is Periplasmic [NiFeSe] hydrogenase large subunit from Desulfomicrobium baculatum (Desulfovibrio baculatus).